We begin with the raw amino-acid sequence, 687 residues long: Calcium-binding protein SP84 (687 aa).

Positions 1-19 are cleaved as a signal peptide; it reads MMRAIYLLVVVCWAAAANA. 5 consecutive EF-hand domains span residues 152–187, 257–292, 406–441, 476–511, and 579–614; these read LESD…HKNK, LTEI…TDDV, KTEA…PHMV, IENA…NNDA, and MTER…VKDL. Residues Asp592, Asn594, Asp596, Glu598, and Asp603 each coordinate Ca(2+).

Expressed in salivary glands where expression is strongest in type III cells in the posterior lobe of the principal glands (at protein level). Not expressed in midgut, Malpighian tubules or epidermis.

It localises to the secreted. In terms of biological role, binds calcium. During feeding of the phloem sap, protein is injected into sieve tubes of rice plants. This process may suppress the sieve-element clogging and facilitate continuous ingestion from sieve tubes. This chain is Calcium-binding protein SP84, found in Nephotettix cincticeps (Green rice leafhopper).